The following is a 229-amino-acid chain: Probable U3 small nucleolar RNA-associated protein 11 (229 aa).

2 disordered regions span residues 1 to 23 and 199 to 229; these read MSSL…ESRK and KKPG…QRKR.

This sequence belongs to the UTP11 family. In terms of assembly, component of the ribosomal small subunit (SSU) processome.

The protein resides in the nucleus. It is found in the nucleolus. In terms of biological role, involved in nucleolar processing of pre-18S ribosomal RNA. The sequence is that of Probable U3 small nucleolar RNA-associated protein 11 from Oryza sativa subsp. japonica (Rice).